A 612-amino-acid chain; its full sequence is Dihydroxy-acid dehydratase (612 aa).

Asp81 lines the Mg(2+) pocket. A [2Fe-2S] cluster-binding site is contributed by Cys122. Residues Asp123 and Lys124 each contribute to the Mg(2+) site. Lys124 is modified (N6-carboxylysine). Residue Cys193 participates in [2Fe-2S] cluster binding. Residue Glu489 participates in Mg(2+) binding. The active-site Proton acceptor is the Ser515.

It belongs to the IlvD/Edd family. In terms of assembly, homodimer. [2Fe-2S] cluster serves as cofactor. It depends on Mg(2+) as a cofactor.

The enzyme catalyses (2R)-2,3-dihydroxy-3-methylbutanoate = 3-methyl-2-oxobutanoate + H2O. It catalyses the reaction (2R,3R)-2,3-dihydroxy-3-methylpentanoate = (S)-3-methyl-2-oxopentanoate + H2O. Its pathway is amino-acid biosynthesis; L-isoleucine biosynthesis; L-isoleucine from 2-oxobutanoate: step 3/4. It participates in amino-acid biosynthesis; L-valine biosynthesis; L-valine from pyruvate: step 3/4. In terms of biological role, functions in the biosynthesis of branched-chain amino acids. Catalyzes the dehydration of (2R,3R)-2,3-dihydroxy-3-methylpentanoate (2,3-dihydroxy-3-methylvalerate) into 2-oxo-3-methylpentanoate (2-oxo-3-methylvalerate) and of (2R)-2,3-dihydroxy-3-methylbutanoate (2,3-dihydroxyisovalerate) into 2-oxo-3-methylbutanoate (2-oxoisovalerate), the penultimate precursor to L-isoleucine and L-valine, respectively. The sequence is that of Dihydroxy-acid dehydratase from Ectopseudomonas mendocina (strain ymp) (Pseudomonas mendocina).